A 263-amino-acid polypeptide reads, in one-letter code: Glutamate 5-kinase (263 aa).

K14 is an ATP binding site. The substrate site is built by S52, D137, and N149. Residues 169-170 (SD) and 211-217 (TGGIVTK) each bind ATP.

This sequence belongs to the glutamate 5-kinase family. Homotetramer; oligomerization is not affected by L-proline feedback inhibition. Mg(2+) is required as a cofactor.

It carries out the reaction L-glutamate + ATP = L-glutamyl 5-phosphate + ADP. It functions in the pathway amino-acid biosynthesis; L-proline biosynthesis; L-glutamate 5-semialdehyde from L-glutamate: step 1/2. Inhibited by L-proline as part of a negative feedback loop. Also inhibited by L-proline analogs 3,4-dehydro-L-proline, L-azetidine-2-carboxylic acid and L-4-thiazolidine carboxylic acid. Its function is as follows. Catalyzes the transfer of a phosphate group to glutamate to form L-glutamate 5-phosphate. May be important for growth and survival. This is Glutamate 5-kinase from Leishmania donovani.